Here is a 556-residue protein sequence, read N- to C-terminus: MGDNGRMTTLCNIAASLPRLARERPDQIAIRCPGGRGANGMAAYDVTLSYAELDARSDAIAAGLALHGIGRGVRAVVMVRPSPEFFLLMFALFKAGAVPVLVDPGIDKRALKQCLDEAQPQAFIGIPLAQLARRLLRWAPSATQIVTVGGRYCWGGVTLARVERDGAGAGSQLADTAADDVAAILFTSGSTGVPKGVVYRHRHFVGQIELLRNAFDMQPGGVDLPTFPPFALFDPALGLTSVIPDMDPTRPATADPRKLHDAMTRFGVTQLFGSPALMRVLADYGQPLPNVRLATSAGAPVPPDVVAKIRALLPADAQFWTPYGATECLPVAAIEGRTLDATRTATEAGAGTCVGQVVAPNEVRIIAIDDAAIPEWSGVRVLAAGEVGEITVAGPTTTDTYFNRDAATRNAKIRERCSDGSERVVHRMGDVGYFDAEGRLWFCGRKTHRVETATGPLYTEQVEPIFNVHPQVRRTALVGVGTPGQQQPVLCVELQPGVAASAFAEVETALRAVGAAHPHTAGIARFLRHSGFPVDIRHNAKIGREKLAIWAAQQRV.

Residues T187–K195, T321–T326, D430, and R445 each bind ATP.

The protein belongs to the ATP-dependent AMP-binding enzyme family. As to quaternary structure, monomer. Forms a complex with OleB and OleD.

It is found in the cytoplasm. The catalysed reaction is a (2R,3S)-2-alkyl-3-hydroxyalkanoate + ATP = a cis-3-alkyl-4-alkyloxetan-2-one + AMP + diphosphate. Its function is as follows. Involved in olefin biosynthesis. Catalyzes the conversion of 2-alkyl-3-hydroxyalkanoic acids to beta-lactones in the presence of ATP. The protein is Olefin beta-lactone synthetase of Xanthomonas campestris pv. campestris (strain ATCC 33913 / DSM 3586 / NCPPB 528 / LMG 568 / P 25).